A 387-amino-acid polypeptide reads, in one-letter code: Protein RecA (387 aa).

78-85 (GPESSGKT) lines the ATP pocket. Residues 355–369 (KSIERDTKETKETKS) show a composition bias toward basic and acidic residues. Residues 355-387 (KSIERDTKETKETKSKQPVSFSTEADGDIAVGE) are disordered.

This sequence belongs to the RecA family.

Its subcellular location is the cytoplasm. Can catalyze the hydrolysis of ATP in the presence of single-stranded DNA, the ATP-dependent uptake of single-stranded DNA by duplex DNA, and the ATP-dependent hybridization of homologous single-stranded DNAs. It interacts with LexA causing its activation and leading to its autocatalytic cleavage. This is Protein RecA from Leptospira biflexa serovar Patoc (strain Patoc 1 / ATCC 23582 / Paris).